Consider the following 673-residue polypeptide: UvrABC system protein B (673 aa).

Residues 26–415 (EGLEDGLAHQ…GDVVDQVVRP (390 aa)) enclose the Helicase ATP-binding domain. Residue 39–46 (GVTGSGKT) coordinates ATP. The Beta-hairpin signature appears at 92–115 (YYDYYQPEAYVPSSDTFIEKDASV). Positions 431 to 597 (QVDDLLSEIR…GLNKKVVDIL (167 aa)) constitute a Helicase C-terminal domain. The interval 608 to 627 (AKGRGKSRPIVEPDNVPMDM) is disordered. Residues 633–668 (QQKIHELEGLMMQHAQNLEFEEAAQIRDQLHQLREL) form the UVR domain.

This sequence belongs to the UvrB family. Forms a heterotetramer with UvrA during the search for lesions. Interacts with UvrC in an incision complex.

It is found in the cytoplasm. The UvrABC repair system catalyzes the recognition and processing of DNA lesions. A damage recognition complex composed of 2 UvrA and 2 UvrB subunits scans DNA for abnormalities. Upon binding of the UvrA(2)B(2) complex to a putative damaged site, the DNA wraps around one UvrB monomer. DNA wrap is dependent on ATP binding by UvrB and probably causes local melting of the DNA helix, facilitating insertion of UvrB beta-hairpin between the DNA strands. Then UvrB probes one DNA strand for the presence of a lesion. If a lesion is found the UvrA subunits dissociate and the UvrB-DNA preincision complex is formed. This complex is subsequently bound by UvrC and the second UvrB is released. If no lesion is found, the DNA wraps around the other UvrB subunit that will check the other stand for damage. This is UvrABC system protein B from Escherichia coli O6:H1 (strain CFT073 / ATCC 700928 / UPEC).